Reading from the N-terminus, the 676-residue chain is WD repeat-containing protein 48 (676 aa).

At Y28 the chain carries Phosphotyrosine. WD repeat units lie at residues 28–67 (YNRN…QDPY), 73–112 (HHTD…CMST), 115–154 (THKD…ALTA), 166–205 (GNKD…KLMK), 208–247 (GHTD…CIAT), 250–289 (VHDE…IRVL), 292–334 (EEKA…NFRA), and 358–397 (KGGA…KVED). Position 214 is an N6-acetyllysine (K214). N6-acetyllysine is present on K578. Residues 607–628 (LDNESQTTSSSNNEKPEQEKEE) are disordered. Residues 609 to 619 (NESQTTSSSNN) are compositionally biased toward low complexity. T613 carries the phosphothreonine modification.

Belongs to the WD repeat WDR48 family. As to quaternary structure, interacts with USP46. Interacts with USP1. Interacts with USP12. Component of the USP12-WDR20-WDR48 deubiquitinating complex. Component of the USP12-DMWD-WDR48 deubiquitinating complex. Interacts with PHLPP1. Interacts with RAD51AP1; the interaction is direct and promotes formation of a trimeric complex with RAD51 via RAD51AP1. Interacts with ATAD5; the interaction regulates USP1-mediated PCNA deubiquitination. Interacts with RAD51; the interaction is enhanced under replication stress. Interacts with ITCH; the interaction is more efficient when both USP12 and WDR48/UAF1 are involved and may facilitate recruitment of the USP12 deubiquitinating complex to Notch.

Its subcellular location is the nucleus. It is found in the cytoplasm. The protein resides in the lysosome. It localises to the late endosome. Its function is as follows. Regulator of deubiquitinating complexes, which acts as a strong activator of USP1, USP12 and USP46. Enhances the USP1-mediated deubiquitination of FANCD2; USP1 being almost inactive by itself. Activates deubiquitination by increasing the catalytic turnover without increasing the affinity of deubiquitinating enzymes for the substrate. Also activates deubiquitinating activity of complexes containing USP12. Docks at the distal end of the USP12 fingers domain and induces a cascade of structural changes leading to the activation of the enzyme. Together with RAD51AP1, promotes DNA repair by stimulating RAD51-mediated homologous recombination. Binds single-stranded DNA (ssDNA) and double-stranded DNA (dsDNA). DNA-binding is required both for USP1-mediated deubiquitination of FANCD2 and stimulation of RAD51-mediated homologous recombination: both WDR48/UAF1 and RAD51AP1 have coordinated role in DNA-binding during these processes. Together with ATAD5 and by regulating USP1 activity, has a role in PCNA-mediated translesion synthesis (TLS) by deubiquitinating monoubiquitinated PCNA. Together with ATAD5, has a role in recruiting RAD51 to stalled forks during replication stress. In Mus musculus (Mouse), this protein is WD repeat-containing protein 48 (Wdr48).